The primary structure comprises 244 residues: Sperm-egg fusion protein Juno (244 aa).

The N-terminal stretch at M1–A19 is a signal peptide. Disulfide bonds link C27/C55, C47/C95, C56/C99, C79/C166, C86/C137, C126/C200, C130/C180, and C143/C160. The important for interaction with IZUMO1 stretch occupies residues W62–L81. N-linked (GlcNAc...) asparagine glycosylation occurs at N73. A propeptide spanning residues S223–A244 is cleaved from the precursor.

Belongs to the folate receptor family. In terms of assembly, monomer. Interacts with IZUMO1; the interaction is direct. IZUMO1 and IZUMO1R/JUNO form a complex with 1:1 stoichiometry. Interacts with FCRL3/MAIA; FCRL3/MAIA replaces IZUMO1R/JUNO as IZUMO1 receptor after sperm-egg adhesion, thereby permitting species-specific gamete fusion. Interacts with WDR54. Post-translationally, the protein is rapidly cleaved following fertilization, being only weakly detectable in zona-intact fertilized eggs at telophase II and undetectable at the pronuclear stage. Sheding is probably required to block to polyspermy and ensuring egg fusion with a single sperm. Expressed in the oocyte (at protein level).

It localises to the cell membrane. The protein localises to the cell projection. It is found in the microvillus membrane. Its function is as follows. Receptor for IZUMO1 present at the cell surface of oocytes (oolemma), which is essential for species-specific gamete recognition and fertilization. The IZUMO1:IZUMO1R/JUNO interaction is a necessary adhesion event between sperm and egg that is required for fertilization but is not sufficient for cell fusion. The ligand-receptor interaction probably does not act as a membrane 'fusogen'. Does not bind folate. This is Sperm-egg fusion protein Juno (Izumo1r) from Rattus norvegicus (Rat).